The primary structure comprises 360 residues: Photosystem II protein D1 3 (360 aa).

Transmembrane regions (helical) follow at residues 29-46, 118-133, and 142-156; these read YVGWFGVLMIPTLLAATI, HFLIGVFCYMGREWEL, and WICVAYSAPVAAATA. Chlorophyll a is bound at residue H118. Y126 provides a ligand contact to pheophytin a. [CaMn4O5] cluster contacts are provided by D170 and E189. Residues 197-218 form a helical membrane-spanning segment; sequence FHQLGVAGVFGGALFSAMHGSL. H198 contacts chlorophyll a. Residues H215 and 264-265 contribute to the a quinone site; that span reads SF. H215 contributes to the Fe cation binding site. H272 contacts Fe cation. The helical transmembrane segment at 274 to 288 threads the bilayer; the sequence is FLAAWPVIGIWFTAL. Residues H332, E333, D342, and A344 each contribute to the [CaMn4O5] cluster site. The propeptide occupies 345 to 360; sequence SAESAPVAMIAPSING.

Belongs to the reaction center PufL/M/PsbA/D family. As to quaternary structure, PSII is composed of 1 copy each of membrane proteins PsbA, PsbB, PsbC, PsbD, PsbE, PsbF, PsbH, PsbI, PsbJ, PsbK, PsbL, PsbM, PsbT, PsbX, PsbY, PsbZ, Psb30/Ycf12, peripheral proteins PsbO, CyanoQ (PsbQ), PsbU, PsbV and a large number of cofactors. It forms dimeric complexes. Precursor protein interacts with Ycf48. The D1/D2 heterodimer binds P680, chlorophylls that are the primary electron donor of PSII, and subsequent electron acceptors. It shares a non-heme iron and each subunit binds pheophytin, quinone, additional chlorophylls, carotenoids and lipids. D1 provides most of the ligands for the Mn4-Ca-O5 cluster of the oxygen-evolving complex (OEC). There is also a Cl(-1) ion associated with D1 and D2, which is required for oxygen evolution. The PSII complex binds additional chlorophylls, carotenoids and specific lipids. serves as cofactor. C-terminally processed by CtpA; processing is essential to allow assembly of the oxygen-evolving complex and thus photosynthetic growth. Post-translationally, tyr-161 forms a radical intermediate that is referred to as redox-active TyrZ, YZ or Y-Z.

It is found in the cellular thylakoid membrane. The enzyme catalyses 2 a plastoquinone + 4 hnu + 2 H2O = 2 a plastoquinol + O2. Its function is as follows. Photosystem II (PSII) is a light-driven water:plastoquinone oxidoreductase that uses light energy to abstract electrons from H(2)O, generating O(2) and a proton gradient subsequently used for ATP formation. It consists of a core antenna complex that captures photons, and an electron transfer chain that converts photonic excitation into a charge separation. The D1/D2 (PsbA/PsbD) reaction center heterodimer binds P680, the primary electron donor of PSII as well as several subsequent electron acceptors. This Thermosynechococcus vestitus (strain NIES-2133 / IAM M-273 / BP-1) protein is Photosystem II protein D1 3.